A 28-amino-acid polypeptide reads, in one-letter code: Trypsin inhibitor A (28 aa).

3 disulfide bridges follow: cysteine 3/cysteine 20, cysteine 10/cysteine 22, and cysteine 16/cysteine 27.

Belongs to the protease inhibitor I7 (squash-type serine protease inhibitor) family.

It localises to the secreted. In terms of biological role, inhibits trypsin. This is Trypsin inhibitor A from Momordica charantia (Bitter gourd).